We begin with the raw amino-acid sequence, 257 residues long: Steroid 5-alpha-reductase DET2 (257 aa).

A run of 6 helical transmembrane segments spans residues 11–31 (FIVFFILVMAFPTFILCQFFT), 47–67 (ISPPIAWAFMESPTLWLTIIV), 78–97 (LAFLLISPYLFHYTNRTIIY), 110–130 (FPLNIAVTAFIFNLLNAYIQS), 151–171 (IGLVIFGSGMLLNIWADGVLL), and 200–220 (IMEWLGWALMTWSWAGLAFFV).

This sequence belongs to the steroid 5-alpha reductase family. In terms of tissue distribution, mostly expressed in leaves and hypocotyls and, to a lower extent, in stems, cotyledons, roots, seeds and callus.

It localises to the membrane. The catalysed reaction is a 3-oxo-5alpha-steroid + NADP(+) = a 3-oxo-Delta(4)-steroid + NADPH + H(+). Its pathway is plant hormone biosynthesis; brassinosteroid biosynthesis. Its activity is regulated as follows. Repressed by steroid (4-MA, VG106, PD91, PD17, Finasteride) and non-steroid (AS601811, AFA27, AFA76, AFA131, AFA192) inhibitors; steroid inhibitors are generally more efficient. Its function is as follows. Involved in a reduction step in the biosynthesis of the plant steroid, brassinolide (BL). Can use progesterone, testosterone, androstenedione and campestenone as substrate. This Solanum lycopersicum (Tomato) protein is Steroid 5-alpha-reductase DET2.